The sequence spans 168 residues: Thermonuclease (168 aa).

The first 27 residues, Met-1–Gly-27, serve as a signal peptide directing secretion. Active-site residues include Arg-64, Glu-72, and Arg-114.

This sequence belongs to the thermonuclease family. Ca(2+) is required as a cofactor.

It is found in the secreted. It catalyses the reaction Endonucleolytic cleavage to nucleoside 3'-phosphates and 3'-phosphooligonucleotide end-products.. In terms of biological role, enzyme that catalyzes the hydrolysis of both DNA and RNA at the 5'-position of the phosphodiester bond. The chain is Thermonuclease (nucI) from Staphylococcus intermedius.